The sequence spans 110 residues: U1-lycotoxin-Ls1dd (110 aa).

An N-terminal signal peptide occupies residues 1–20 (MKFVLLFGVLLVTLFSYSSA). Positions 21–44 (EMLDDFDQADEDELLSLIEKEEAR) are excised as a propeptide. Intrachain disulfides connect Cys47–Cys62, Cys54–Cys71, Cys61–Cys89, and Cys73–Cys87.

The protein belongs to the neurotoxin 19 (CSTX) family. 03 subfamily. As to expression, expressed by the venom gland.

It localises to the secreted. This is U1-lycotoxin-Ls1dd from Lycosa singoriensis (Wolf spider).